We begin with the raw amino-acid sequence, 245 residues long: MIIPAIDLIDGNVVRLYQGDYGQQTTFDLSPLAQLQSYEAQGAKWLHIVDLTGAKDPGKRQTLLISQLVAGLNANIQVGGGIRTEEQVTELLDIGVKRVVIGSLAVKEPELVKQWFIKYGSEAICLALDVNINQSGEKIVAVSGWQSGGGKSLESLVETFSAVGLKHALVTDISRDGTLTGANTALYQEIAASYPDIAWQASGGIATLEDVAAVRDSGAAGIIIGKALLINQFNVVEAIQCWPND.

The active-site Proton acceptor is aspartate 7. Residue aspartate 129 is the Proton donor of the active site.

The protein belongs to the HisA/HisF family.

The protein resides in the cytoplasm. It carries out the reaction 1-(5-phospho-beta-D-ribosyl)-5-[(5-phospho-beta-D-ribosylamino)methylideneamino]imidazole-4-carboxamide = 5-[(5-phospho-1-deoxy-D-ribulos-1-ylimino)methylamino]-1-(5-phospho-beta-D-ribosyl)imidazole-4-carboxamide. Its pathway is amino-acid biosynthesis; L-histidine biosynthesis; L-histidine from 5-phospho-alpha-D-ribose 1-diphosphate: step 4/9. This is 1-(5-phosphoribosyl)-5-[(5-phosphoribosylamino)methylideneamino] imidazole-4-carboxamide isomerase from Shewanella baltica (strain OS155 / ATCC BAA-1091).